Reading from the N-terminus, the 579-residue chain is Aspartate--tRNA(Asp/Asn) ligase (579 aa).

Glu-171 contributes to the L-aspartate binding site. Positions 195 to 198 (QLFK) are aspartate. L-aspartate is bound at residue Arg-217. Residues 217-219 (RDE) and Gln-226 each bind ATP. His-444 is a binding site for L-aspartate. Glu-475 contributes to the ATP binding site. Arg-482 is a binding site for L-aspartate. 527–530 (GLDR) provides a ligand contact to ATP.

The protein belongs to the class-II aminoacyl-tRNA synthetase family. Type 1 subfamily. As to quaternary structure, homodimer.

Its subcellular location is the cytoplasm. It catalyses the reaction tRNA(Asx) + L-aspartate + ATP = L-aspartyl-tRNA(Asx) + AMP + diphosphate. In terms of biological role, aspartyl-tRNA synthetase with relaxed tRNA specificity since it is able to aspartylate not only its cognate tRNA(Asp) but also tRNA(Asn). Reaction proceeds in two steps: L-aspartate is first activated by ATP to form Asp-AMP and then transferred to the acceptor end of tRNA(Asp/Asn). In Thermotoga maritima (strain ATCC 43589 / DSM 3109 / JCM 10099 / NBRC 100826 / MSB8), this protein is Aspartate--tRNA(Asp/Asn) ligase.